A 227-amino-acid chain; its full sequence is UPF0173 metal-dependent hydrolase Tlet_1100 (227 aa).

Belongs to the UPF0173 family.

In Pseudothermotoga lettingae (strain ATCC BAA-301 / DSM 14385 / NBRC 107922 / TMO) (Thermotoga lettingae), this protein is UPF0173 metal-dependent hydrolase Tlet_1100.